We begin with the raw amino-acid sequence, 62 residues long: Large ribosomal subunit protein bL28 (62 aa).

A disordered region spans residues 1–28; it reads MARVCAITGRKARSGNSRSHAMNATKRK.

This sequence belongs to the bacterial ribosomal protein bL28 family.

In Bacillus thuringiensis (strain Al Hakam), this protein is Large ribosomal subunit protein bL28.